Here is a 955-residue protein sequence, read N- to C-terminus: Isoleucine--tRNA ligase (955 aa).

Positions 60–70 match the 'HIGH' region motif; that stretch reads PYANGDLHIGH. Glu-563 contributes to the L-isoleucyl-5'-AMP binding site. A 'KMSKS' region motif is present at residues 604-608; sequence KMSKS. Lys-607 is an ATP binding site. The Zn(2+) site is built by Cys-926, Cys-929, Cys-946, and Cys-949.

This sequence belongs to the class-I aminoacyl-tRNA synthetase family. IleS type 1 subfamily. In terms of assembly, monomer. Requires Zn(2+) as cofactor.

The protein resides in the cytoplasm. The enzyme catalyses tRNA(Ile) + L-isoleucine + ATP = L-isoleucyl-tRNA(Ile) + AMP + diphosphate. Catalyzes the attachment of isoleucine to tRNA(Ile). As IleRS can inadvertently accommodate and process structurally similar amino acids such as valine, to avoid such errors it has two additional distinct tRNA(Ile)-dependent editing activities. One activity is designated as 'pretransfer' editing and involves the hydrolysis of activated Val-AMP. The other activity is designated 'posttransfer' editing and involves deacylation of mischarged Val-tRNA(Ile). This is Isoleucine--tRNA ligase from Cyanothece sp. (strain PCC 7425 / ATCC 29141).